We begin with the raw amino-acid sequence, 276 residues long: Large ribosomal subunit protein uL2 (276 aa).

Residues 223–276 (GAAMNPVDHPHGGGEGRAPRGRPPASPWGWQTKGLKTRKRRKPSSRFIIARRKK) are disordered. The span at 230–240 (DHPHGGGEGRA) shows a compositional bias: basic and acidic residues. Residues 257–276 (LKTRKRRKPSSRFIIARRKK) are compositionally biased toward basic residues.

The protein belongs to the universal ribosomal protein uL2 family. In terms of assembly, part of the 50S ribosomal subunit. Forms a bridge to the 30S subunit in the 70S ribosome.

Functionally, one of the primary rRNA binding proteins. Required for association of the 30S and 50S subunits to form the 70S ribosome, for tRNA binding and peptide bond formation. It has been suggested to have peptidyltransferase activity; this is somewhat controversial. Makes several contacts with the 16S rRNA in the 70S ribosome. The chain is Large ribosomal subunit protein uL2 from Thermus thermophilus (strain ATCC BAA-163 / DSM 7039 / HB27).